Reading from the N-terminus, the 512-residue chain is DNA-binding protein (512 aa).

Residues 1–105 (MAGRGGSQLE…QDSEDEREAE (105 aa)) are disordered. Residues 9–21 (LERRRERTPDRGR) show a composition bias toward basic and acidic residues. Residues 69-78 (QEQPPPPQQP) show a composition bias toward pro residues. A compositionally biased stretch (basic residues) spans 79–88 (PKKKPRKTKH). Positions 96-105 (QDSEDEREAE) are enriched in acidic residues. The residue at position 174 (Y174) is a Phosphotyrosine; by host. Residues C263 and H265 each coordinate Zn(2+). The tract at residues 276 to 310 (IEMDVASENGQRALKENPDRAKVTQNRWGRSVVQL) is flexible loop. Zn(2+) is bound by residues C318, C334, C376, C378, C430, and C447. A C-terminal arm, DBP binding region spans residues 495–512 (VSLPAGHAETSRQNPFDF).

This sequence belongs to the adenoviridae E2A DNA-binding protein family. Homomultimerizes on viral ssDNA bound to pTP. Forms a initiation complex with viral polymerase, pTP and hosts NFIA and POU2F1/OCT1. Interacts with host SRCAP.

The protein localises to the host nucleus. In terms of biological role, plays a role in the elongation phase of viral strand displacement replication by unwinding the template in an ATP-independent fashion, employing its capacity to form multimers. Also enhances the rate of initiation. Released from template upon second strand synthesis. Assembles in complex with viral pTP, viral pol, host NFIA and host POU2F1/OCT1 on viral origin of replication. Covers the whole ssDNA genome during synthesis. The complementary strand synthesis induces its relese from DNA template. May inhibit cellular transcription mediated by the interaction between host SRCAP and CBP. The sequence is that of DNA-binding protein from Homo sapiens (Human).